Consider the following 319-residue polypeptide: 4-hydroxy-3-methylbut-2-enyl diphosphate reductase (319 aa).

Cys18 is a [4Fe-4S] cluster binding site. Residues His47 and His81 each contribute to the (2E)-4-hydroxy-3-methylbut-2-enyl diphosphate site. Residues His47 and His81 each coordinate dimethylallyl diphosphate. His47 and His81 together coordinate isopentenyl diphosphate. Cys103 is a [4Fe-4S] cluster binding site. Residue His131 participates in (2E)-4-hydroxy-3-methylbut-2-enyl diphosphate binding. His131 is a dimethylallyl diphosphate binding site. Position 131 (His131) interacts with isopentenyl diphosphate. Glu133 serves as the catalytic Proton donor. Residue Thr172 coordinates (2E)-4-hydroxy-3-methylbut-2-enyl diphosphate. Residue Cys202 participates in [4Fe-4S] cluster binding. Residues Ser230, Ser231, Asn232, and Ser275 each contribute to the (2E)-4-hydroxy-3-methylbut-2-enyl diphosphate site. Dimethylallyl diphosphate is bound by residues Ser230, Ser231, Asn232, and Ser275. Isopentenyl diphosphate-binding residues include Ser230, Ser231, Asn232, and Ser275.

Belongs to the IspH family. [4Fe-4S] cluster is required as a cofactor.

It carries out the reaction isopentenyl diphosphate + 2 oxidized [2Fe-2S]-[ferredoxin] + H2O = (2E)-4-hydroxy-3-methylbut-2-enyl diphosphate + 2 reduced [2Fe-2S]-[ferredoxin] + 2 H(+). The enzyme catalyses dimethylallyl diphosphate + 2 oxidized [2Fe-2S]-[ferredoxin] + H2O = (2E)-4-hydroxy-3-methylbut-2-enyl diphosphate + 2 reduced [2Fe-2S]-[ferredoxin] + 2 H(+). It functions in the pathway isoprenoid biosynthesis; dimethylallyl diphosphate biosynthesis; dimethylallyl diphosphate from (2E)-4-hydroxy-3-methylbutenyl diphosphate: step 1/1. The protein operates within isoprenoid biosynthesis; isopentenyl diphosphate biosynthesis via DXP pathway; isopentenyl diphosphate from 1-deoxy-D-xylulose 5-phosphate: step 6/6. Catalyzes the conversion of 1-hydroxy-2-methyl-2-(E)-butenyl 4-diphosphate (HMBPP) into a mixture of isopentenyl diphosphate (IPP) and dimethylallyl diphosphate (DMAPP). Acts in the terminal step of the DOXP/MEP pathway for isoprenoid precursor biosynthesis. This is 4-hydroxy-3-methylbut-2-enyl diphosphate reductase from Beijerinckia indica subsp. indica (strain ATCC 9039 / DSM 1715 / NCIMB 8712).